Reading from the N-terminus, the 125-residue chain is Mitochondrial import inner membrane translocase subunit TIM16 (125 aa).

The tract at residues glutamate 58 to arginine 110 is J-like. Phosphoserine is present on serine 69.

The protein belongs to the TIM16/PAM16 family. Probable component of the PAM complex at least composed of a mitochondrial HSP70 protein, GRPEL1 or GRPEL2, TIMM44, TIMM16/PAM16 and TIMM14/DNAJC19. Interacts with DNAJC19. Directly interacts with DNAJC15; this interaction counteracts DNAJC15-dependent stimulation of HSPA9 ATPase activity. Associates with the TIM23 complex. In terms of tissue distribution, expressed in trabecular bone and cartilage and by differentiated chondrocytes localized in the hypertrophic zone and by osteoblasts at early developmental stages.

The protein resides in the mitochondrion inner membrane. In terms of biological role, regulates ATP-dependent protein translocation into the mitochondrial matrix. Inhibits DNAJC19 stimulation of HSPA9/Mortalin ATPase activity. The polypeptide is Mitochondrial import inner membrane translocase subunit TIM16 (Mus musculus (Mouse)).